A 375-amino-acid polypeptide reads, in one-letter code: Killer cell immunoglobulin-like receptor 2DL5A (375 aa).

The first 21 residues, Met-1–Thr-21, serve as a signal peptide directing secretion. The Extracellular portion of the chain corresponds to His-22–His-238. Ig-like C2-type domains are found at residues Gly-42–Ser-102 and Gly-137–Ser-200. A disulfide bridge links Cys-49 with Cys-95. Asn-139, Asn-173, and Asn-218 each carry an N-linked (GlcNAc...) asparagine glycan. Cys-144 and Cys-193 are joined by a disulfide. The disordered stretch occupies residues Val-213–Thr-233. Low complexity predominate over residues Ser-219–Ser-231. The helical transmembrane segment at Leu-239 to Leu-259 threads the bilayer. Residues Leu-260 to Ile-375 are Cytoplasmic-facing. Positions Ala-334 to Ile-375 are disordered. Positions Arg-355–Ala-366 are enriched in polar residues.

The protein belongs to the immunoglobulin superfamily.

The protein resides in the cell membrane. Functionally, receptor on natural killer (NK) cells for HLA-C alleles. Inhibits the activity of NK cells thus preventing cell lysis. The polypeptide is Killer cell immunoglobulin-like receptor 2DL5A (KIR2DL5A) (Homo sapiens (Human)).